Here is a 414-residue protein sequence, read N- to C-terminus: Serine/threonine transporter SstT (414 aa).

Over 2-15 the chain is Cytoplasmic; that stretch reads TTQRSPGLFRRLAH. A helical membrane pass occupies residues 16–36; it reads GSLVKQILVGLVLGILLAWIS. At 37–45 the chain is on the periplasmic side; the sequence is KPAAEAVGL. A helical membrane pass occupies residues 46 to 66; that stretch reads LGTLFVGALKAVAPILVLMLV. Over 67 to 83 the chain is Cytoplasmic; sequence MASIANHQHGQKTNIRP. A helical membrane pass occupies residues 84–104; that stretch reads ILFLYLLGTFSAALAAVVFSF. Residues 105-142 are Periplasmic-facing; the sequence is AFPSTLHLSSSAGDISPPSGIVEVMRGLVMSMVSNPID. The helical transmembrane segment at 143-163 threads the bilayer; that stretch reads ALLKGNYIGILVWAIGLGFAL. The Cytoplasmic segment spans residues 164-179; it reads RHGNETTKNLVNDMSN. Residues 180–200 traverse the membrane as a helical segment; that stretch reads AVTFMVKLVIRFAPFGIFGLV. At 201-217 the chain is on the periplasmic side; it reads SSTLATTGFSTLWGYAQ. A helical membrane pass occupies residues 218–238; sequence LLVVLVGCMLLVALVVNPLLV. At 239–299 the chain is on the cytoplasmic side; the sequence is WWKIRRNPFP…VSIPLGATIN (61 aa). Residues 300-320 form a helical membrane-spanning segment; it reads MAGAAITITVLTLAAVNTLGI. The Periplasmic segment spans residues 321-331; the sequence is PVDLPTALLLS. The helical transmembrane segment at 332 to 352 threads the bilayer; it reads VVASLCACGASGVAGGSLLLI. The Cytoplasmic segment spans residues 353–414; sequence PLACNMFGIS…DRLANSALRN (62 aa).

It belongs to the dicarboxylate/amino acid:cation symporter (DAACS) (TC 2.A.23) family.

Its subcellular location is the cell inner membrane. The enzyme catalyses L-serine(in) + Na(+)(in) = L-serine(out) + Na(+)(out). It catalyses the reaction L-threonine(in) + Na(+)(in) = L-threonine(out) + Na(+)(out). Its function is as follows. Involved in the import of serine and threonine into the cell, with the concomitant import of sodium (symport system). The protein is Serine/threonine transporter SstT of Shigella flexneri.